A 487-amino-acid chain; its full sequence is Histamine H1 receptor (487 aa).

Residues 1 to 29 (MSLPNSSCLLEDKMCEGNKTTMASPQLMP) lie on the Extracellular side of the membrane. Asn-5 and Asn-18 each carry an N-linked (GlcNAc...) asparagine glycan. Residues 30–50 (LVVVLSTISLVTVGLNLLVLY) form a helical membrane-spanning segment. Over 51–64 (AVRSERKLHTVGNL) the chain is Cytoplasmic. The chain crosses the membrane as a helical span at residues 65-89 (YIVSLSVADLIVGAVVMPMNILYLL). The Extracellular segment spans residues 90-97 (MSKWSLGR). A helical transmembrane segment spans residues 98 to 123 (PLCLFWLSMDYVASTASIFSVFILCI). Cys-100 and Cys-180 are joined by a disulfide. The histamine site is built by Asp-107 and Thr-112. An important for agonist binding region spans residues 107-112 (DYVAST). Topologically, residues 124–144 (DRYRSVQQPLRYLKYRTKTRA) are cytoplasmic. Residues Thr-140 and Thr-142 each carry the phosphothreonine modification. The chain crosses the membrane as a helical span at residues 145 to 164 (SATILGAWFLSFLWVIPILG). Topologically, residues 165 to 188 (WNHFRQQISVRREDKCETDFYDVT) are extracellular. A helical transmembrane segment spans residues 189 to 211 (WFKVMTAIINFYLPTLLMLWFYA). Residue Asn-198 participates in histamine binding. At 212 to 416 (KIYKAVQKHC…MNRERKAAKQ (205 aa)) the chain is on the cytoplasmic side. Position 230 is a phosphoserine (Ser-230). Residues 238-261 (KLRPENPKGDAKKPGKESPWEVLK) show a composition bias toward basic and acidic residues. Positions 238-286 (KLRPENPKGDAKKPGKESPWEVLKRKPKDAGGGSVLKSPSQTPKEMKSP) are disordered. Position 279 is a phosphothreonine (Thr-279). Residues Ser-344 and Ser-347 each carry the phosphoserine modification. Residues 345–379 (EISEDQMLGDSQSFSRTDSDTTTETAPGKGKLRSG) are disordered. Polar residues predominate over residues 353-369 (GDSQSFSRTDSDTTTET). A phosphoserine mark is found at Ser-380, Ser-396, and Ser-398. A helical transmembrane segment spans residues 417 to 440 (LGFIMAAFILCWIPYFIFFMVIAF). The segment at 424–428 (FILCW) is important for agonist binding. Residue Tyr-431 coordinates histamine. An intrachain disulfide couples Cys-441 to Cys-444. Over 441–446 (CKNCCN) the chain is Extracellular. A helical transmembrane segment spans residues 447 to 469 (EHLHMFTIWLGYINSTLNPLIYP). Topologically, residues 470–487 (LCNENFKKTFKRILHIRS) are cytoplasmic.

The protein belongs to the G-protein coupled receptor 1 family. Phosphorylation at sites in the second and third cytoplasmic loops independently contribute to agonist-induced receptor down-regulation.

Its subcellular location is the cell membrane. Functionally, G-protein-coupled receptor for histamine, a biogenic amine that functions as an immune modulator and a neurotransmitter. Through the H1 receptor, histamine mediates the contraction of smooth muscles and increases capillary permeability due to contraction of terminal venules. Also mediates neurotransmission in the central nervous system and thereby regulates circadian rhythms, emotional and locomotor activities as well as cognitive functions. This Pongo pygmaeus (Bornean orangutan) protein is Histamine H1 receptor.